Consider the following 287-residue polypeptide: Uroplakin-3a (287 aa).

An N-terminal signal peptide occupies residues 1 to 18 (MPPLWVVLALGCLRLGSG). Over 19 to 207 (VNLQPQLASV…DTWPGRRSGG (189 aa)) the chain is Lumenal. Asparagine 74, asparagine 139, and asparagine 170 each carry an N-linked (GlcNAc...) asparagine glycan. The helical transmembrane segment at 208–235 (MIVITSILGSLPFFLLIGFAGAIVLSLV) threads the bilayer. At 236–287 (DRGDADGATSHDSQITQEAVPKSLGTSEPSYTSVNRGPSLDRAEVYASKLQD) the chain is on the cytoplasmic side. A disordered region spans residues 243–274 (ATSHDSQITQEAVPKSLGTSEPSYTSVNRGPS). Polar residues predominate over residues 259-271 (LGTSEPSYTSVNR).

Belongs to the uroplakin-3 family. Heterodimer with uroplakin-1B (UPK1B). Bladder epithelium.

The protein resides in the endoplasmic reticulum membrane. Component of the asymmetric unit membrane (AUM); a highly specialized biomembrane elaborated by terminally differentiated urothelial cells. May play an important role in AUM-cytoskeleton interaction in terminally differentiated urothelial cells. It also contributes to the formation of urothelial glycocalyx which may play an important role in preventing bacterial adherence. This chain is Uroplakin-3a (UPK3A), found in Bos taurus (Bovine).